The primary structure comprises 314 residues: Transcription factor DICHOTOMA (314 aa).

The region spanning 87 to 145 (KKDRHSKINRPQGPRDRRVRLSIGIARKFFDLQEMLGFDKPSKTLDWLLTKSKEAIKEL) is the TCP domain. A R domain is found at 201-218 (KESRAKARARARERTKEK).

It is found in the nucleus. Functionally, transcription regulator involved in the dorsovental asymmetry of flowers. Promotes dorsal identity. The protein is Transcription factor DICHOTOMA (DICH) of Antirrhinum majus (Garden snapdragon).